Consider the following 485-residue polypeptide: E3 ubiquitin-protein ligase RNF14 (485 aa).

The RWD domain maps to 11–137; it reads DELLALASIY…QFLKEETLTY (127 aa). A D-box motif is present at residues 37-45; sequence RIYLDLPQN. The tract at residues 217 to 458 is TRIAD supradomain; sequence KLFLCSICFC…DSESPCFNRL (242 aa). Zn(2+)-binding residues include C221, C224, C239, H241, C244, C247, C266, C271, C310, C315, C330, C333, C338, C341, and H346. An RING-type 1 zinc finger spans residues 221-271; that stretch reads CSICFCEKLGSDCMYFLECKHVYCKACLKDYFEIQIKDGQVKCLNCPEPQC. The IBR-type zinc-finger motif lies at 290 to 351; sequence ARYDRLLLQS…RLTYHGLSPC (62 aa). S349 is subject to Phosphoserine. Zn(2+)-binding residues include C351, C405, and C408. An RING-type 2; atypical zinc finger spans residues 405-434; sequence CPCCGTPIQKLDGCNKMTCTGCMQYFCWIC. Residue C418 is part of the active site. Positions 423, 426, 431, 434, 446, and 454 each coordinate Zn(2+).

This sequence belongs to the RBR family. RNF14 subfamily. Interacts with GCN1; interaction takes place in response to ribosome collisions and is required for ubiquitination of EEF1A1/eEF1A. Interacts with the ubiquitin-conjugating enzymes UBE2E1 and UBE2E2. Interacts with AR/androgen receptor. Interacts with TCF7/TCF1, TCF7L1/TCF3 and TCF7L2/TCF4; promoting Wnt signaling. In terms of processing, RING-type zinc finger-dependent and UBE2E2-dependent autoubiquitination.

It is found in the cytoplasm. Its subcellular location is the nucleus. It catalyses the reaction [E2 ubiquitin-conjugating enzyme]-S-ubiquitinyl-L-cysteine + [acceptor protein]-L-lysine = [E2 ubiquitin-conjugating enzyme]-L-cysteine + [acceptor protein]-N(6)-ubiquitinyl-L-lysine.. It participates in protein modification; protein ubiquitination. Functionally, E3 ubiquitin-protein ligase that plays a key role in the RNF14-RNF25 translation quality control pathway, a pathway that takes place when a ribosome has stalled during translation, and which promotes ubiquitination and degradation of translation factors on stalled ribosomes. Recruited to stalled ribosomes by the ribosome collision sensor GCN1 and mediates 'Lys-6'-linked ubiquitination of target proteins, leading to their degradation. Mediates ubiquitination of EEF1A1/eEF1A and ETF1/eRF1 translation factors on stalled ribosomes, leading to their degradation. Also catalyzes ubiquitination of ribosomal proteins RPL0, RPL1, RPL12, RPS13 and RPS17. Specifically required to resolve RNA-protein cross-links caused by reactive aldehydes, which trigger translation stress by stalling ribosomes: acts by catalying 'Lys-6'-linked ubiquitination of RNA-protein cross-links, leading to their removal by the ATP-dependent unfoldase VCP and subsequent degradation by the proteasome. Independently of its function in the response to stalled ribosomes, acts as a regulator of transcription in Wnt signaling via its interaction with TCF transcription factors (TCF7/TCF1, TCF7L1/TCF3 and TCF7L2/TCF4). May also play a role as a coactivator for androgen- and, to a lesser extent, progesterone-dependent transcription. The protein is E3 ubiquitin-protein ligase RNF14 of Mus musculus (Mouse).